The following is a 291-amino-acid chain: Transcription antitermination protein NusB (291 aa).

This sequence belongs to the NusB family.

Involved in transcription antitermination. Required for transcription of ribosomal RNA (rRNA) genes. Binds specifically to the boxA antiterminator sequence of the ribosomal RNA (rrn) operons. The chain is Transcription antitermination protein NusB from Synechococcus sp. (strain JA-2-3B'a(2-13)) (Cyanobacteria bacterium Yellowstone B-Prime).